We begin with the raw amino-acid sequence, 207 residues long: Thymidylate kinase (207 aa).

ATP is bound at residue 10–17 (GIEGSGKS).

Belongs to the thymidylate kinase family.

The catalysed reaction is dTMP + ATP = dTDP + ADP. Functionally, phosphorylation of dTMP to form dTDP in both de novo and salvage pathways of dTTP synthesis. The polypeptide is Thymidylate kinase (Halothermothrix orenii (strain H 168 / OCM 544 / DSM 9562)).